Reading from the N-terminus, the 257-residue chain is Capsid protein (257 aa).

This sequence belongs to the geminiviridae capsid protein family.

The protein localises to the virion. In terms of biological role, encapsidates the viral DNA into characteristic twinned ('geminate') particles. Plays a role in protection of the genome from degradation, virus acquisition and transmission by insect vectors, infectivity, and systemic movement. The protein is Capsid protein of Capsicum annuum (Capsicum pepper).